A 415-amino-acid chain; its full sequence is Esterase FrsA (415 aa).

Positions 1–23 (MANRNLSESLFKPRQKHQETSTL) are disordered.

This sequence belongs to the FrsA family.

The catalysed reaction is a carboxylic ester + H2O = an alcohol + a carboxylate + H(+). Catalyzes the hydrolysis of esters. This is Esterase FrsA from Photorhabdus laumondii subsp. laumondii (strain DSM 15139 / CIP 105565 / TT01) (Photorhabdus luminescens subsp. laumondii).